Consider the following 133-residue polypeptide: Small heat shock protein ibp (133 aa).

A sHSP domain is found at 11-126 (EQPLSENPNY…KPKKISINEE (116 aa)).

Belongs to the small heat shock protein (HSP20) family.

The chain is Small heat shock protein ibp (ibp) from Wigglesworthia glossinidia brevipalpis.